Here is a 250-residue protein sequence, read N- to C-terminus: NADH-quinone oxidoreductase subunit C (250 aa).

Belongs to the complex I 30 kDa subunit family. In terms of assembly, NDH-1 is composed of 14 different subunits. Subunits NuoB, C, D, E, F, and G constitute the peripheral sector of the complex.

It is found in the cell inner membrane. It catalyses the reaction a quinone + NADH + 5 H(+)(in) = a quinol + NAD(+) + 4 H(+)(out). In terms of biological role, NDH-1 shuttles electrons from NADH, via FMN and iron-sulfur (Fe-S) centers, to quinones in the respiratory chain. The immediate electron acceptor for the enzyme in this species is believed to be ubiquinone. Couples the redox reaction to proton translocation (for every two electrons transferred, four hydrogen ions are translocated across the cytoplasmic membrane), and thus conserves the redox energy in a proton gradient. The polypeptide is NADH-quinone oxidoreductase subunit C (Xanthomonas euvesicatoria pv. vesicatoria (strain 85-10) (Xanthomonas campestris pv. vesicatoria)).